The primary structure comprises 189 residues: GTPase NRas (189 aa).

Residues 10 to 18 (GAGGVGKSA) and 29 to 30 (VD) each bind GTP. The Effector region signature appears at 32 to 40 (YDPTIEDSY). 57–61 (DTAGQ) provides a ligand contact to GTP. At S89 the chain carries Phosphoserine. GTP is bound at residue 116–119 (NKCD). The interval 166 to 185 (YRMKKLNSSDDGTQGCLGLS) is hypervariable region. K170 is covalently cross-linked (Glycyl lysine isopeptide (Lys-Gly) (interchain with G-Cter in ubiquitin)). C181 carries the S-palmitoyl cysteine lipid modification. C186 carries the S-farnesyl cysteine lipid modification. A propeptide spans 187–189 (AVM) (removed in mature form).

This sequence belongs to the small GTPase superfamily. Ras family. Interacts (active GTP-bound form preferentially) with RGS14. Interacts (active GTP-bound form) with RASSF7. Interacts (active GTP-bound form) with both SHOC2 and PP1c (all isoforms) to form a tertiary complex; SHOC2 and PP1c preferably bind M-Ras/MRAS, but they also bind K-Ras/KRAS, N-Ras/NRAS and H-Ras/HRAS. Palmitoylated by the ZDHHC9-GOLGA7 complex. Depalmitoylated by ABHD17A, ABHD17B and ABHD17C. A continuous cycle of de- and re-palmitoylation regulates rapid exchange between plasma membrane and Golgi. Post-translationally, acetylation at Lys-104 prevents interaction with guanine nucleotide exchange factors (GEFs). In terms of processing, ubiquitinated by the BCR(LZTR1) E3 ubiquitin ligase complex at Lys-170 in a non-degradative manner, leading to inhibit Ras signaling by decreasing Ras association with membranes. Phosphorylation at Ser-89 enhances NRAS association with its downstream effectors.

The protein resides in the cell membrane. It localises to the golgi apparatus membrane. The catalysed reaction is GTP + H2O = GDP + phosphate + H(+). Alternates between an inactive form bound to GDP and an active form bound to GTP. Activated by a guanine nucleotide-exchange factor (GEF) and inactivated by a GTPase-activating protein (GAP). Functionally, ras proteins bind GDP/GTP and possess intrinsic GTPase activity. The chain is GTPase NRas (NRAS) from Monodelphis domestica (Gray short-tailed opossum).